Here is a 659-residue protein sequence, read N- to C-terminus: Cysteine-rich receptor-like protein kinase 7 (659 aa).

Positions 1-23 (MSSLFPFIFLFLFSFLTSFRASA) are cleaved as a signal peptide. Topologically, residues 24 to 273 (QDPRFLAYYC…SLSDKSGNSN (250 aa)) are extracellular. Gnk2-homologous domains follow at residues 27–131 (RFLA…HKNI) and 142–244 (FILR…LYDF). N-linked (GlcNAc...) asparagine glycans are attached at residues N35, N42, N60, N69, and N103. N246 carries N-linked (GlcNAc...) asparagine glycosylation. Residues 274–294 (VVVVAVVVPIIVAVLIFIAGY) traverse the membrane as a helical segment. The Cytoplasmic portion of the chain corresponds to 295-659 (CFFAKRAKKT…DKSMSDLDPR (365 aa)). The Protein kinase domain occupies 336–622 (FSENNKIGRG…ALPAPQQPGF (287 aa)). Residues 342–350 (IGRGGFGDV) and K364 each bind ATP. Y409 is subject to Phosphotyrosine. The active-site Proton acceptor is the D461. S465 is subject to Phosphoserine. T501 carries the post-translational modification Phosphothreonine. Phosphotyrosine is present on Y509. The interval 626-659 (SRPGTNRLDSDQSTTNKSVTVSIDDKSMSDLDPR) is disordered. Residues 636–646 (DQSTTNKSVTV) show a composition bias toward polar residues. Over residues 648–659 (IDDKSMSDLDPR) the composition is skewed to basic and acidic residues.

It belongs to the protein kinase superfamily. Ser/Thr protein kinase family. CRK subfamily.

It is found in the membrane. It carries out the reaction L-seryl-[protein] + ATP = O-phospho-L-seryl-[protein] + ADP + H(+). The enzyme catalyses L-threonyl-[protein] + ATP = O-phospho-L-threonyl-[protein] + ADP + H(+). The polypeptide is Cysteine-rich receptor-like protein kinase 7 (CRK7) (Arabidopsis thaliana (Mouse-ear cress)).